The following is an 822-amino-acid chain: MPTVISASVAPRTGAEPRSPGPIAQAAQGKGTEAGGGNPSGIYSAIISRNFPIIGVKEKTFEQLHRKCLEKKVLFVDPEFPPDETSLFYSQKFPIQFIWKRPPEICENPRFIIGGANRTDICQGDLGDCWFLAAIACLTLNERLLFRVIPHDQSFTENYAGIFHFQFWRYGDWVDVVIDDCLPTYNNQLVFTKSNHRNEFWSALLEKAYAKLHGSYEALKAGNTTEGMEDFTGELTEFFEIKDAPRDMYKIMKKAIERGSLMGCSIDDGTNMTYGTSPSGLKMGELIERMVRNMDNSRLRDSDLIPEGCSDDRPTRTIVPVQYETRMACGLVKGHAYSVTGLEEALYKGEKVKLVRLRNPWGQVEWNGSWSDSWKDWSYVDKDEKARLQHQVTEDGEFWMSYDDFIYHFTKLEICNLTADALESDKLQTWTVSVNEGRWVRGCSAGGCRNFPDTFWTNPQYRLKLLEEDDDPDDSEVICSFLVALMQKNRRKDRKLGANLFTIGFAIYEVPKEMHGNKQHLQKDFFLYNASKARSRTYINMREVSERFRLPPSEYVIVPSTYEPHQEGEFILRVFSEKRNLSEEVENTISVDRPVKKKKPKPIIFGSDRANSNKELGVDQESEEGKDNTSPDKQAKSPQLKPGNIDQESKEQRQFRNIFRQIAGDDMEICADELKNVLNRVVNKHKDLKTQGFTLESCRSMIALMDTDGSGRLNLQEFHHLWKKIKTWQKIFKHYDTDQSGTINSYEMRNAVNDAGFHLNNQLYDIITMRYADKYMNIDFDSFICCFVRLEGMFRAFNAFDKDGDGIIKLNVLEWLQLTMYA.

The disordered stretch occupies residues 1–36 (MPTVISASVAPRTGAEPRSPGPIAQAAQGKGTEAGG). In terms of domain architecture, Calpain catalytic spans 74 to 418 (LFVDPEFPPD…FTKLEICNLT (345 aa)). Catalysis depends on residues C129, H335, and N359. The domain III stretch occupies residues 419–587 (ADALESDKLQ…KRNLSEEVEN (169 aa)). Positions 588–649 (TISVDRPVKK…LKPGNIDQES (62 aa)) are linker. Positions 600-651 (PKPIIFGSDRANSNKELGVDQESEEGKDNTSPDKQAKSPQLKPGNIDQESKE) are disordered. Basic and acidic residues predominate over residues 623 to 635 (EEGKDNTSPDKQA). 4 EF-hand domains span residues 650–684 (KEQR…VVNK), 693–726 (FTLE…KKIK), 723–758 (KKIK…AGFH), and 788–822 (VRLE…TMYA). A domain IV region spans residues 650-822 (KEQRQFRNIF…LEWLQLTMYA (173 aa)). A663, D666, E668, E673, D706, D708, S710, R712, E717, D736, D738, S740, T742, E747, D801, D803, D805, and I807 together coordinate Ca(2+).

It belongs to the peptidase C2 family. As to quaternary structure, homodimer; via EF-hand domain 4. Interacts with TTN/titin. Interacts with CMYA5; this interaction, which results in CMYA5 proteolysis, may protect CAPN3 from autolysis. Interacts with SIMC1. Interacts with UTP25; the interaction is required for CAPN3 translocation to the nucleolus. As to expression, skeletal muscle.

The protein localises to the cytoplasm. It localises to the nucleus. It is found in the nucleolus. The enzyme catalyses Broad endopeptidase activity.. With respect to regulation, activated by micromolar concentrations of calcium and inhibited by calpastatin. Calcium-regulated non-lysosomal thiol-protease. Proteolytically cleaves CTBP1. Mediates, with UTP25, the proteasome-independent degradation of p53/TP53. The protein is Calpain-3 (CAPN3) of Ovis aries (Sheep).